A 586-amino-acid polypeptide reads, in one-letter code: Protein HOL1 (586 aa).

At Met-1–His-66 the chain is on the extracellular side. A helical transmembrane segment spans residues Phe-67–Ala-87. The Cytoplasmic segment spans residues Gln-88 to Asn-103. Residues Thr-104–Ala-124 traverse the membrane as a helical segment. The Extracellular portion of the chain corresponds to Asn-125–Lys-130. Residues Ile-131–Lys-151 traverse the membrane as a helical segment. At Arg-152 to Ser-189 the chain is on the cytoplasmic side. Residues Val-190–Gly-210 traverse the membrane as a helical segment. Topologically, residues Tyr-211–Arg-219 are extracellular. A helical transmembrane segment spans residues Trp-220–Cys-240. Residues Glu-241–Arg-362 lie on the Cytoplasmic side of the membrane. Residues Met-363–Leu-383 traverse the membrane as a helical segment. The Extracellular segment spans residues Thr-384–Thr-413. The chain crosses the membrane as a helical span at residues Leu-414–Trp-434. Residues Met-435–Arg-448 are Cytoplasmic-facing. A helical membrane pass occupies residues Leu-449–Gly-469. Residues Thr-470–Gln-477 lie on the Extracellular side of the membrane. A helical transmembrane segment spans residues Ala-478 to Met-498. The Cytoplasmic segment spans residues Ala-499 to Met-508. A helical membrane pass occupies residues Val-509–Phe-529. Over Thr-530 to Tyr-544 the chain is Extracellular. The chain crosses the membrane as a helical span at residues Ile-545–Gly-565. Topologically, residues Lys-566–Val-586 are cytoplasmic.

Its subcellular location is the membrane. In terms of biological role, seems to be involved in the uptake of several cations and of histidinol. This Saccharomyces cerevisiae (strain ATCC 204508 / S288c) (Baker's yeast) protein is Protein HOL1 (HOL1).